Here is a 226-residue protein sequence, read N- to C-terminus: Triosephosphate isomerase (226 aa).

12 to 14 serves as a coordination point for substrate; the sequence is NFK. His96 serves as the catalytic Electrophile. The active-site Proton acceptor is Glu144. Substrate contacts are provided by residues Ile149, Gly184, and 205-206; that span reads AS.

This sequence belongs to the triosephosphate isomerase family. In terms of assembly, homotetramer; dimer of dimers.

The protein localises to the cytoplasm. It catalyses the reaction D-glyceraldehyde 3-phosphate = dihydroxyacetone phosphate. The protein operates within carbohydrate biosynthesis; gluconeogenesis. It participates in carbohydrate degradation; glycolysis; D-glyceraldehyde 3-phosphate from glycerone phosphate: step 1/1. Its function is as follows. Involved in the gluconeogenesis. Catalyzes stereospecifically the conversion of dihydroxyacetone phosphate (DHAP) to D-glyceraldehyde-3-phosphate (G3P). The chain is Triosephosphate isomerase from Thermococcus kodakarensis (strain ATCC BAA-918 / JCM 12380 / KOD1) (Pyrococcus kodakaraensis (strain KOD1)).